A 302-amino-acid chain; its full sequence is Oxygen-dependent coproporphyrinogen-III oxidase (302 aa).

S94 serves as a coordination point for substrate. A divalent metal cation is bound by residues H98 and H108. H108 (proton donor) is an active-site residue. 110–112 provides a ligand contact to substrate; sequence NVR. 2 residues coordinate a divalent metal cation: H147 and H177. Positions 242-277 are important for dimerization; that stretch reads YVEFNLVWDRGTLFGLQSGGRTESILMSMPPLARWE. 260 to 262 serves as a coordination point for substrate; sequence GGR.

It belongs to the aerobic coproporphyrinogen-III oxidase family. In terms of assembly, homodimer. It depends on a divalent metal cation as a cofactor.

Its subcellular location is the cytoplasm. The enzyme catalyses coproporphyrinogen III + O2 + 2 H(+) = protoporphyrinogen IX + 2 CO2 + 2 H2O. It participates in porphyrin-containing compound metabolism; protoporphyrin-IX biosynthesis; protoporphyrinogen-IX from coproporphyrinogen-III (O2 route): step 1/1. Its function is as follows. Involved in the heme biosynthesis. Catalyzes the aerobic oxidative decarboxylation of propionate groups of rings A and B of coproporphyrinogen-III to yield the vinyl groups in protoporphyrinogen-IX. The protein is Oxygen-dependent coproporphyrinogen-III oxidase of Photorhabdus laumondii subsp. laumondii (strain DSM 15139 / CIP 105565 / TT01) (Photorhabdus luminescens subsp. laumondii).